A 264-amino-acid polypeptide reads, in one-letter code: Thiazole synthase (264 aa).

The active-site Schiff-base intermediate with DXP is Lys106. 1-deoxy-D-xylulose 5-phosphate is bound by residues Gly167, 193-194, and 215-216; these read AG and NS.

It belongs to the ThiG family. In terms of assembly, homotetramer. Forms heterodimers with either ThiH or ThiS.

Its subcellular location is the cytoplasm. The catalysed reaction is [ThiS sulfur-carrier protein]-C-terminal-Gly-aminoethanethioate + 2-iminoacetate + 1-deoxy-D-xylulose 5-phosphate = [ThiS sulfur-carrier protein]-C-terminal Gly-Gly + 2-[(2R,5Z)-2-carboxy-4-methylthiazol-5(2H)-ylidene]ethyl phosphate + 2 H2O + H(+). It functions in the pathway cofactor biosynthesis; thiamine diphosphate biosynthesis. Its function is as follows. Catalyzes the rearrangement of 1-deoxy-D-xylulose 5-phosphate (DXP) to produce the thiazole phosphate moiety of thiamine. Sulfur is provided by the thiocarboxylate moiety of the carrier protein ThiS. In vitro, sulfur can be provided by H(2)S. This chain is Thiazole synthase, found in Stutzerimonas stutzeri (strain A1501) (Pseudomonas stutzeri).